Reading from the N-terminus, the 230-residue chain is N-(5'-phosphoribosyl)anthranilate isomerase (230 aa).

It belongs to the TrpF family.

It carries out the reaction N-(5-phospho-beta-D-ribosyl)anthranilate = 1-(2-carboxyphenylamino)-1-deoxy-D-ribulose 5-phosphate. It participates in amino-acid biosynthesis; L-tryptophan biosynthesis; L-tryptophan from chorismate: step 3/5. The chain is N-(5'-phosphoribosyl)anthranilate isomerase from Syntrophus aciditrophicus (strain SB).